A 505-amino-acid polypeptide reads, in one-letter code: 2,3-bisphosphoglycerate-independent phosphoglycerate mutase (505 aa).

Asp12 and Ser62 together coordinate Mn(2+). Ser62 functions as the Phosphoserine intermediate in the catalytic mechanism. Residues His123, 153–154 (RD), Arg185, Arg191, 257–260 (RPDR), and Lys330 contribute to the substrate site. Asp397, His401, Asp438, His439, and His456 together coordinate Mn(2+).

Belongs to the BPG-independent phosphoglycerate mutase family. In terms of assembly, monomer. Mn(2+) serves as cofactor.

The catalysed reaction is (2R)-2-phosphoglycerate = (2R)-3-phosphoglycerate. It functions in the pathway carbohydrate degradation; glycolysis; pyruvate from D-glyceraldehyde 3-phosphate: step 3/5. Catalyzes the interconversion of 2-phosphoglycerate and 3-phosphoglycerate. The chain is 2,3-bisphosphoglycerate-independent phosphoglycerate mutase from Staphylococcus aureus (strain Mu50 / ATCC 700699).